The primary structure comprises 124 residues: Replication restart protein PriB (124 aa).

Residues 12–112 (IDNCLILSGS…VHAEHIEFID (101 aa)) form the SSB domain.

Belongs to the PriB family. As to quaternary structure, homodimer. Interacts with PriA and DnaT. Component of the replication restart primosome. Primosome assembly occurs via a 'hand-off' mechanism. PriA binds to replication forks, subsequently PriB then DnaT bind; DnaT then displaces ssDNA to generate the helicase loading substrate.

In terms of biological role, involved in the restart of stalled replication forks, which reloads the replicative helicase on sites other than the origin of replication; the PriA-PriB pathway is the major replication restart pathway. During primosome assembly it facilitates complex formation between PriA and DnaT on DNA; stabilizes PriA on DNA. Stimulates the DNA unwinding activity of PriA helicase. The protein is Replication restart protein PriB of Actinobacillus pleuropneumoniae serotype 5b (strain L20).